A 61-amino-acid chain; its full sequence is Small ribosomal subunit protein uS14B (61 aa).

Residues cysteine 24, cysteine 27, cysteine 40, and cysteine 43 each contribute to the Zn(2+) site.

Belongs to the universal ribosomal protein uS14 family. Zinc-binding uS14 subfamily. As to quaternary structure, part of the 30S ribosomal subunit. Contacts proteins S3 and S10. It depends on Zn(2+) as a cofactor.

In terms of biological role, binds 16S rRNA, required for the assembly of 30S particles and may also be responsible for determining the conformation of the 16S rRNA at the A site. In Mycolicibacterium gilvum (strain PYR-GCK) (Mycobacterium gilvum (strain PYR-GCK)), this protein is Small ribosomal subunit protein uS14B.